A 1513-amino-acid polypeptide reads, in one-letter code: MICQLLWHEHNSMGSGREKKIRKLGDNFSLPYLKFDCDHNDKNYRASNRPFGLSTGLSVQLNASNMTDPFKFLLDNWHTIFKNGAIKLLPPEGWQIPVVLDQGAFEFQSKRQCLNKGCLNYEKNYDYFKKLKAFHESRGLYFYHPPIIGNRPVDFLRLRNAISKFTNSGSSLNNEILHKVIIYLRLEDTKEVRQVLTRCYDRYIKPFERDSSPSFKSKRSESSTRKIRNTRSSAQQESPIPETSAQSPVQTIQVNGSTSLKRPLIERGEQCEYCGLDKNPETILLCDGCEAAYHTSCLDPPLTSIPKEDWYCDACKFNISDYDPRKGFKWKLSSLKERSAEIFNTLGERNSSSKLTNLTEDDIELFYWSSLAESNSGFAPLELEGLSQAYTSTIQSSLPSKEVFPLEKYSSEPWNLHNLPFENPCLFNYSFSDLSSLTITRLSIGMVFYTHGWTKSSLSTGLLHHHRFGDTVTWYVLPPDESDAFERYLISSYPQYTMEDLNRSNGLPVIVSPSSLIENGFHPIAIDLRPNEFLVVSPNSYHMGFHQGFSSFESVNFATVNWIKDGLLNSSISVLKSMRIPSSVSYEAVIISMVLSKNPCFSSEWLIKCFEDMIANESASKNEIMKLVPNIQALKLESSVPLEIRCSNCKQPCFLSFMQCHEPKKFICLGDCVKEVSLNATSWMLFYRWDVHELSNLAERFVSLIRGPEEWTNRLRSVLSTSPKPQLKVLKSLLVDAEKAMLTTPETVNLRDFVQNANSWIDSVNECLKVASLKRKKDKKPPLFKAHDHWNNTSNLKDSAVLFKVLQTSRSMAFTCQEIENMKQKAFDLLEFRNRLINSFSGPLDKNTCQRLLTEAELLGFTIPELGIIQKYLIQFEWLDMFYSFETTRTTDSDLERLITYGVSAGIPEDNDYMIFAKAMKGRAEIWENQVYDTLSKSNISYDKLSLLRDEAMNLCVNKELFSKVVGILNNAEEIKNKIATLCERSQEKDFALRPSIDEVKEALASAEKLPILSESTVTLQKMYDVVLEWIRRGKRLFGKANAPLEILGQHLDYVEKRNSASLSLNDRPGPPMEPASRETSPDSEGRLTIRKKKGCIFCFCRLPESGVMIECEICHEWYHAKCLKMSKKKLRQDEKFTCPICDYRVEIPRLSNRPKLEDLQSLYKDVKLLPFQPKETETLRKVVDLASKFRQEMQALAHNPFGLTMAEVPLARFYLRKMEGAEILLVDETNLFRQKLHECVPIAPNPPPIIGESKSTRKPRPTKRQRQIMKQVAEGLLPASAIAPPKSSNEKKSSNNVKAVEAETKSKSEKSPKKNGTNISDANNKNESHVSLMKNWKLGSPAFVTLVKEKNSSCLCGEEFSPRDSFIDCTICERRFHYDCVGLNNEIADSVSKFTCPICMEQSGGIYPWQLRPRNGMHPDHISGFSKEVETDPKLGSSGYTLNNSKFDKAAVSKTLSAQDVSRLQKVSCGEHLYFGTDVFTPLGDMATSASMFSLDDSSEKTDAFTENFLNV.

Residues 56-97 (GLSVQLNASNMTDPFKFLLDNWHTIFKNGAIKLLPPEGWQIP) form the JmjN domain. Residues 121–212 (YEKNYDYFKK…YIKPFERDSS (92 aa)) form the ARID domain. Residues 211–253 (SSPSFKSKRSESSTRKIRNTRSSAQQESPIPETSAQSPVQTIQ) are disordered. A compositionally biased stretch (polar residues) spans 230 to 253 (TRSSAQQESPIPETSAQSPVQTIQ). The segment at 268 to 318 (GEQCEYCGLDKNPETILLCDGCEAAYHTSCLDPPLTSIPKEDWYCDACKFN) adopts a PHD-type 1 zinc-finger fold. A JmjC domain is found at 408-574 (KYSSEPWNLH…DGLLNSSISV (167 aa)). Serine 722 carries the post-translational modification Phosphoserine. Residues 1063-1086 (LSLNDRPGPPMEPASRETSPDSEG) form a disordered region. Over residues 1076 to 1086 (ASRETSPDSEG) the composition is skewed to basic and acidic residues. The PHD-type 2 zinc-finger motif lies at 1093 to 1145 (KKGCIFCFCRLPESGVMIECEICHEWYHAKCLKMSKKKLRQDEKFTCPICDYR). The RING-type 1; degenerate zinc finger occupies 1096 to 1143 (CIFCFCRLPESGVMIECEICHEWYHAKCLKMSKKKLRQDEKFTCPICD). Disordered regions lie at residues 1244 to 1268 (APNPPPIIGESKSTRKPRPTKRQRQ) and 1280 to 1327 (ASAI…NNKN). Residues 1257–1268 (TRKPRPTKRQRQ) show a composition bias toward basic residues. Over residues 1301-1313 (VEAETKSKSEKSP) the composition is skewed to basic and acidic residues. Over residues 1316-1326 (NGTNISDANNK) the composition is skewed to polar residues. The PHD-type 3 zinc finger occupies 1352–1403 (NSSCLCGEEFSPRDSFIDCTICERRFHYDCVGLNNEIADSVSKFTCPICMEQ). The RING-type 2; degenerate zinc finger occupies 1354–1401 (SCLCGEEFSPRDSFIDCTICERRFHYDCVGLNNEIADSVSKFTCPICM).

In terms of assembly, component of the Lid2 complex composed of ash2, jmj3, lid2, sdc1 and snt2.

Its subcellular location is the nucleus. The protein is Lid2 complex component lid2 (lid2) of Schizosaccharomyces pombe (strain 972 / ATCC 24843) (Fission yeast).